A 139-amino-acid polypeptide reads, in one-letter code: Metallothiol transferase FosB (139 aa).

In terms of domain architecture, VOC spans 4 to 119 (GINHITYSVS…DGHKLELHTG (116 aa)). His-7, His-66, and Glu-115 together coordinate Mg(2+). The active-site Proton donor/acceptor is Glu-115.

The protein belongs to the fosfomycin resistance protein family. FosB subfamily. In terms of assembly, homodimer. The cofactor is Mg(2+).

It is found in the cytoplasm. Functionally, metallothiol transferase which confers resistance to fosfomycin by catalyzing the addition of a thiol cofactor to fosfomycin. L-cysteine is probably the physiological thiol donor. The protein is Metallothiol transferase FosB of Staphylococcus epidermidis.